Consider the following 186-residue polypeptide: Single-stranded DNA-binding protein 1 (186 aa).

In terms of domain architecture, SSB spans 1-108 (MDATVTVVGN…LEIDEIGPTL (108 aa)). The interval 120 to 186 (QAGHGVSPDP…EDFDSDEVPF (67 aa)) is disordered. Polar residues predominate over residues 132–141 (DSQTGQGIDS). The segment covering 175-186 (SYEDFDSDEVPF) has biased composition (acidic residues).

As to quaternary structure, homotetramer.

The chain is Single-stranded DNA-binding protein 1 (ssb1) from Tropheryma whipplei (strain TW08/27) (Whipple's bacillus).